The primary structure comprises 217 residues: Octanoyltransferase (217 aa).

A BPL/LPL catalytic domain is found at 32-207 (SDSPDELWIV…TLSQLLGYQQ (176 aa)). Substrate is bound by residues 71–78 (RGGQVTYH), 138–140 (SLG), and 151–153 (GLA). The Acyl-thioester intermediate role is filled by Cys169.

It belongs to the LipB family.

The protein localises to the cytoplasm. It catalyses the reaction octanoyl-[ACP] + L-lysyl-[protein] = N(6)-octanoyl-L-lysyl-[protein] + holo-[ACP] + H(+). It participates in protein modification; protein lipoylation via endogenous pathway; protein N(6)-(lipoyl)lysine from octanoyl-[acyl-carrier-protein]: step 1/2. In terms of biological role, catalyzes the transfer of endogenously produced octanoic acid from octanoyl-acyl-carrier-protein onto the lipoyl domains of lipoate-dependent enzymes. Lipoyl-ACP can also act as a substrate although octanoyl-ACP is likely to be the physiological substrate. This is Octanoyltransferase from Shewanella sp. (strain MR-7).